The following is a 386-amino-acid chain: Patatin-16 (386 aa).

A signal peptide spans 1 to 23; sequence MATTKSFLILIVMILATTSSTFA. One can recognise a PNPLA domain in the interval 32–229; sequence LSIDGGGIKG…TVADPALLSV (198 aa). The GXGXXG signature appears at 36-41; that stretch reads GGGIKG. Positions 75-79 match the GXSXG motif; it reads GTSTG. The active-site Nucleophile is Ser-77. The N-linked (GlcNAc...) asparagine glycan is linked to Asn-115. Asp-215 functions as the Proton acceptor in the catalytic mechanism. The short motif at 215–217 is the DGA/G element; sequence DGA. Residues 360–384 are a coiled coil; the sequence is ETYEEALKRFAKLLSDRKKLRANKA.

This sequence belongs to the patatin family.

It is found in the vacuole. Its function is as follows. Probable lipolytic acyl hydrolase (LAH), an activity which is thought to be involved in the response of tubers to pathogens. This Solanum tuberosum (Potato) protein is Patatin-16.